Here is a 377-residue protein sequence, read N- to C-terminus: MKSVGLITEYNPFHNGHLFHATLSKQRSETNVTIAIMSGNFVMRGEPAIYHKFKRTEMALSAVDLVVELPLIGSLSSSDTFAEIAIKTAQYLDIDIISFGSESASLKDLQYLATQMIDYEKHPDFKEKLKQGKSYPRILSELTHNDTLLQSPNNILGISYLKAMQQFAPHMSALTIKREGSLHHQKVIDHHHFASGTSIRRSLMNDNVDWKNVVPNQIQSLYCKPHTTVEDTFPFIKHQLITQPKESLHSIYTINEGFENRLQTMIHRSDSFESLLSNLNTKRYTQTYIQRVLMNVLLNITKDDVNKEINAVRVLGMSEKGRSYLKYLKANYPNRHYITNVNQKTAHYFKNEIKATHVYNLLSNQSQTDFNTPLVRI.

ATP contacts are provided by residues 7–20, Gly100, Asn153, and Arg178; that span reads ITEY…HLFH.

The protein belongs to the TmcAL family.

The protein localises to the cytoplasm. It catalyses the reaction cytidine(34) in elongator tRNA(Met) + acetate + ATP = N(4)-acetylcytidine(34) in elongator tRNA(Met) + AMP + diphosphate. Its function is as follows. Catalyzes the formation of N(4)-acetylcytidine (ac(4)C) at the wobble position of elongator tRNA(Met), using acetate and ATP as substrates. First activates an acetate ion to form acetyladenylate (Ac-AMP) and then transfers the acetyl group to tRNA to form ac(4)C34. The polypeptide is tRNA(Met) cytidine acetate ligase (Staphylococcus epidermidis (strain ATCC 35984 / DSM 28319 / BCRC 17069 / CCUG 31568 / BM 3577 / RP62A)).